The primary structure comprises 74 residues: UPF0435 protein GK0418 (74 aa).

This sequence belongs to the UPF0435 family.

The sequence is that of UPF0435 protein GK0418 from Geobacillus kaustophilus (strain HTA426).